Consider the following 289-residue polypeptide: 4-hydroxy-tetrahydrodipicolinate synthase (289 aa).

Residue threonine 43 participates in pyruvate binding. Tyrosine 131 acts as the Proton donor/acceptor in catalysis. Lysine 160 (schiff-base intermediate with substrate) is an active-site residue. Residue valine 200 participates in pyruvate binding.

The protein belongs to the DapA family. In terms of assembly, homotetramer; dimer of dimers.

Its subcellular location is the cytoplasm. It carries out the reaction L-aspartate 4-semialdehyde + pyruvate = (2S,4S)-4-hydroxy-2,3,4,5-tetrahydrodipicolinate + H2O + H(+). It functions in the pathway amino-acid biosynthesis; L-lysine biosynthesis via DAP pathway; (S)-tetrahydrodipicolinate from L-aspartate: step 3/4. Functionally, catalyzes the condensation of (S)-aspartate-beta-semialdehyde [(S)-ASA] and pyruvate to 4-hydroxy-tetrahydrodipicolinate (HTPA). The protein is 4-hydroxy-tetrahydrodipicolinate synthase of Methanococcus maripaludis (strain C6 / ATCC BAA-1332).